A 138-amino-acid polypeptide reads, in one-letter code: MRTLWIMAVLLVGVEGSLLEFGRMIKEETGKNPLFSYISYGCYCGWGGQGQPKDATDRCCFVHDCCYGKLWSCSPKTDIYFYYRKNGAIVCARGTWCEKQICECDKAAAICFRENLGTYKAEYESYGKSRCTEKSLKC.

Positions 1 to 16 (MRTLWIMAVLLVGVEG) are cleaved as a signal peptide. 7 disulfide bridges follow: cysteine 42–cysteine 131, cysteine 44–cysteine 60, cysteine 59–cysteine 111, cysteine 65–cysteine 138, cysteine 66–cysteine 104, cysteine 73–cysteine 97, and cysteine 91–cysteine 102. The Ca(2+) site is built by tyrosine 43, glycine 45, and glycine 47. Residue histidine 63 is part of the active site. Aspartate 64 provides a ligand contact to Ca(2+). The active site involves aspartate 105.

As to quaternary structure, monomer. Ca(2+) serves as cofactor. As to expression, expressed by the venom gland.

It localises to the secreted. The catalysed reaction is a 1,2-diacyl-sn-glycero-3-phosphocholine + H2O = a 1-acyl-sn-glycero-3-phosphocholine + a fatty acid + H(+). Snake venom phospholipase A2 (PLA2) that impairs hemostasis. It weakly inhibits ADP-induced platelet aggregation when tested on platelet rich plasma from human and rabbit blood (15-25% of inhibition at 5-10 ug of enzyme), and dose-dependently inhibits blood coagulation, possibly by inhibiting thrombin activation. Also induces local edema a few hours after injection in the hind foot. Exhibits high hydrolytic activities toward L-dipalmitoyl phosphatidylcholine. PLA2 catalyzes the calcium-dependent hydrolysis of the 2-acyl groups in 3-sn-phosphoglycerides. The protein is Basic phospholipase A2 Tpu-G6D49 of Craspedocephalus puniceus (Flat-nosed pitviper).